The primary structure comprises 406 residues: Cysteine desulfurase (406 aa).

Lys226 is subject to N6-(pyridoxal phosphate)lysine. The active-site Cysteine persulfide intermediate is Cys364.

Belongs to the class-V pyridoxal-phosphate-dependent aminotransferase family. Csd subfamily. As to quaternary structure, homodimer. Interacts with SufE and the SufBCD complex composed of SufB, SufC and SufD. The interaction with SufE is required to mediate the direct transfer of the sulfur atom from the S-sulfanylcysteine. The cofactor is pyridoxal 5'-phosphate.

The protein localises to the cytoplasm. It catalyses the reaction (sulfur carrier)-H + L-cysteine = (sulfur carrier)-SH + L-alanine. The enzyme catalyses L-selenocysteine + AH2 = hydrogenselenide + L-alanine + A + H(+). It functions in the pathway cofactor biosynthesis; iron-sulfur cluster biosynthesis. Its function is as follows. Cysteine desulfurases mobilize the sulfur from L-cysteine to yield L-alanine, an essential step in sulfur metabolism for biosynthesis of a variety of sulfur-containing biomolecules. Component of the suf operon, which is activated and required under specific conditions such as oxidative stress and iron limitation. Acts as a potent selenocysteine lyase in vitro, that mobilizes selenium from L-selenocysteine. Selenocysteine lyase activity is however unsure in vivo. The chain is Cysteine desulfurase from Salmonella choleraesuis (strain SC-B67).